Here is a 454-residue protein sequence, read N- to C-terminus: Bifunctional protein GlmU (454 aa).

The segment at 1–228 (MSLKVIILAA…EMEVLGVNNK (228 aa)) is pyrophosphorylase. Residues 8 to 11 (LAAG), Lys-22, Gln-73, 78 to 79 (GT), 100 to 102 (YGD), Gly-138, Glu-153, Asn-168, and Asn-226 contribute to the UDP-N-acetyl-alpha-D-glucosamine site. Asp-102 provides a ligand contact to Mg(2+). Asn-226 serves as a coordination point for Mg(2+). Residues 229–249 (SQLQSLERQYQAQLAEELMEQ) form a linker region. Residues 250–454 (GVTVLDASRI…IKGWQKPTKN (205 aa)) form an N-acetyltransferase region. UDP-N-acetyl-alpha-D-glucosamine contacts are provided by Arg-332 and Lys-350. The active-site Proton acceptor is His-362. UDP-N-acetyl-alpha-D-glucosamine contacts are provided by Tyr-365 and Asn-376. Residues Ala-379, 385 to 386 (NY), Ser-404, Ala-422, and Arg-439 contribute to the acetyl-CoA site.

The protein in the N-terminal section; belongs to the N-acetylglucosamine-1-phosphate uridyltransferase family. This sequence in the C-terminal section; belongs to the transferase hexapeptide repeat family. As to quaternary structure, homotrimer. It depends on Mg(2+) as a cofactor.

Its subcellular location is the cytoplasm. The catalysed reaction is alpha-D-glucosamine 1-phosphate + acetyl-CoA = N-acetyl-alpha-D-glucosamine 1-phosphate + CoA + H(+). The enzyme catalyses N-acetyl-alpha-D-glucosamine 1-phosphate + UTP + H(+) = UDP-N-acetyl-alpha-D-glucosamine + diphosphate. It functions in the pathway nucleotide-sugar biosynthesis; UDP-N-acetyl-alpha-D-glucosamine biosynthesis; N-acetyl-alpha-D-glucosamine 1-phosphate from alpha-D-glucosamine 6-phosphate (route II): step 2/2. The protein operates within nucleotide-sugar biosynthesis; UDP-N-acetyl-alpha-D-glucosamine biosynthesis; UDP-N-acetyl-alpha-D-glucosamine from N-acetyl-alpha-D-glucosamine 1-phosphate: step 1/1. It participates in bacterial outer membrane biogenesis; LPS lipid A biosynthesis. In terms of biological role, catalyzes the last two sequential reactions in the de novo biosynthetic pathway for UDP-N-acetylglucosamine (UDP-GlcNAc). The C-terminal domain catalyzes the transfer of acetyl group from acetyl coenzyme A to glucosamine-1-phosphate (GlcN-1-P) to produce N-acetylglucosamine-1-phosphate (GlcNAc-1-P), which is converted into UDP-GlcNAc by the transfer of uridine 5-monophosphate (from uridine 5-triphosphate), a reaction catalyzed by the N-terminal domain. This Hydrogenovibrio crunogenus (strain DSM 25203 / XCL-2) (Thiomicrospira crunogena) protein is Bifunctional protein GlmU.